Consider the following 217-residue polypeptide: Large ribosomal subunit protein uL3 (217 aa).

The segment at 127–162 (GFSRGPMSHGSKNHRAPGSTGAGTTPGRIYPGKRMA) is disordered. The segment covering 142-153 (APGSTGAGTTPG) has biased composition (low complexity).

The protein belongs to the universal ribosomal protein uL3 family. As to quaternary structure, part of the 50S ribosomal subunit. Forms a cluster with proteins L14 and L19.

One of the primary rRNA binding proteins, it binds directly near the 3'-end of the 23S rRNA, where it nucleates assembly of the 50S subunit. In Prochlorococcus marinus (strain MIT 9301), this protein is Large ribosomal subunit protein uL3.